Consider the following 176-residue polypeptide: Prion-like protein doppel (176 aa).

A signal peptide spans 1–25 (MRKHLSWWWLATVCMLLFSHLSAVQ). The flexible tail stretch occupies residues 27–50 (RGIKHRIKWNRKALPSTAQITEAQ). Threonine 43 carries an O-linked (GalNAc...) threonine glycan. Positions 51 to 152 (VAENRPGAFI…KHCEFWLERG (102 aa)) are globular. 2 disulfide bridges follow: cysteine 94–cysteine 145 and cysteine 108–cysteine 140. 2 N-linked (GlcNAc...) asparagine glycosylation sites follow: asparagine 98 and asparagine 110. The cu(2+) binding stretch occupies residues 122–139 (KPDNKLHQQVLWRLVQEL). Glycine 152 carries the GPI-anchor amidated glycine lipid modification. The propeptide at 153–176 (AGLRVTMHQPVLLCLLALIWLTVK) is removed in mature form.

The protein belongs to the prion family. N-glycosylated. N-glycosylated at two distinct sites. In terms of processing, O-glycosylated. In terms of tissue distribution, expressed in testis, in Sertoli cells, ejaculated spermatozoa and in seminal fluid (at protein level).

Its subcellular location is the cell membrane. In terms of biological role, required for normal acrosome reaction and for normal male fertility. Can bind Cu(2+). The chain is Prion-like protein doppel (PRND) from Homo sapiens (Human).